We begin with the raw amino-acid sequence, 208 residues long: Proteasome subunit beta 2 (208 aa).

Positions 1–14 (MGNELQLENKILKG) are cleaved as a propeptide — removed in mature form; by autocatalysis. Residue threonine 15 is the Nucleophile of the active site.

This sequence belongs to the peptidase T1B family. In terms of assembly, the 20S proteasome core is composed of 14 alpha and 14 beta subunits that assemble into four stacked heptameric rings, resulting in a barrel-shaped structure. The two inner rings, each composed of seven catalytic beta subunits, are sandwiched by two outer rings, each composed of seven alpha subunits. The catalytic chamber with the active sites is on the inside of the barrel. Has a gated structure, the ends of the cylinder being occluded by the N-termini of the alpha-subunits. Is capped at one or both ends by the proteasome regulatory ATPase, PAN.

It localises to the cytoplasm. It catalyses the reaction Cleavage of peptide bonds with very broad specificity.. The formation of the proteasomal ATPase PAN-20S proteasome complex, via the docking of the C-termini of PAN into the intersubunit pockets in the alpha-rings, triggers opening of the gate for substrate entry. Interconversion between the open-gate and close-gate conformations leads to a dynamic regulation of the 20S proteasome proteolysis activity. In terms of biological role, component of the proteasome core, a large protease complex with broad specificity involved in protein degradation. The chain is Proteasome subunit beta 2 from Saccharolobus solfataricus (strain ATCC 35092 / DSM 1617 / JCM 11322 / P2) (Sulfolobus solfataricus).